The following is a 698-amino-acid chain: FHF complex subunit HOOK-interacting protein 2B (698 aa).

This sequence belongs to the FHIP family.

The protein is FHF complex subunit HOOK-interacting protein 2B (fhip2b) of Xenopus tropicalis (Western clawed frog).